The following is a 275-amino-acid chain: uncharacterized protein (275 aa).

Positions 97, 102, 136, and 140 each coordinate [4Fe-4S] cluster. Siroheme is bound at residue C140.

The protein belongs to the nitrite and sulfite reductase 4Fe-4S domain family.

This is an uncharacterized protein from Methanocaldococcus jannaschii (strain ATCC 43067 / DSM 2661 / JAL-1 / JCM 10045 / NBRC 100440) (Methanococcus jannaschii).